Here is a 60-residue protein sequence, read N- to C-terminus: GEQLCRLRAEFQASRYLTEERRTALARELRLNEAQIKIWFQNKRAKIKKASGVKNALALY.

Positions 1–41 form a DNA-binding region, homeobox; the sequence is GEQLCRLRAEFQASRYLTEERRTALARELRLNEAQIKIWFQ.

It belongs to the engrailed homeobox family.

The protein localises to the nucleus. The polypeptide is Homeobox protein engrailed-like (Lampetra planeri (Brook lamprey)).